We begin with the raw amino-acid sequence, 556 residues long: 2-succinyl-5-enolpyruvyl-6-hydroxy-3-cyclohexene-1-carboxylate synthase (556 aa).

Belongs to the TPP enzyme family. MenD subfamily. Homodimer. It depends on Mg(2+) as a cofactor. Requires Mn(2+) as cofactor. Thiamine diphosphate is required as a cofactor.

It catalyses the reaction isochorismate + 2-oxoglutarate + H(+) = 5-enolpyruvoyl-6-hydroxy-2-succinyl-cyclohex-3-ene-1-carboxylate + CO2. It functions in the pathway quinol/quinone metabolism; 1,4-dihydroxy-2-naphthoate biosynthesis; 1,4-dihydroxy-2-naphthoate from chorismate: step 2/7. It participates in quinol/quinone metabolism; menaquinone biosynthesis. Catalyzes the thiamine diphosphate-dependent decarboxylation of 2-oxoglutarate and the subsequent addition of the resulting succinic semialdehyde-thiamine pyrophosphate anion to isochorismate to yield 2-succinyl-5-enolpyruvyl-6-hydroxy-3-cyclohexene-1-carboxylate (SEPHCHC). This is 2-succinyl-5-enolpyruvyl-6-hydroxy-3-cyclohexene-1-carboxylate synthase from Klebsiella pneumoniae subsp. pneumoniae (strain ATCC 700721 / MGH 78578).